The primary structure comprises 180 residues: HTH-type transcriptional regulator EcpR (180 aa).

Positions 122–180 (KDIKKDKITDREMKIIRMTAQGMQPKSIARIENCSVKTVYTHRRNAEAKLYSKIYKLVQ) constitute an HTH luxR-type domain. The segment at residues 146 to 165 (PKSIARIENCSVKTVYTHRR) is a DNA-binding region (H-T-H motif).

It belongs to the EcpR/MatA family.

Its subcellular location is the cytoplasm. Part of the ecpRABCDE operon, which encodes the E.coli common pilus (ECP). ECP plays a dual role in early-stage biofilm development and host cell recognition. Positively regulates the expression of the ecp operon. This is HTH-type transcriptional regulator EcpR (ecpR) from Klebsiella pneumoniae (strain 342).